The sequence spans 258 residues: Imidazole glycerol phosphate synthase subunit HisF (258 aa).

Residues Asp-11 and Asp-130 contribute to the active site.

Belongs to the HisA/HisF family. Heterodimer of HisH and HisF.

Its subcellular location is the cytoplasm. The catalysed reaction is 5-[(5-phospho-1-deoxy-D-ribulos-1-ylimino)methylamino]-1-(5-phospho-beta-D-ribosyl)imidazole-4-carboxamide + L-glutamine = D-erythro-1-(imidazol-4-yl)glycerol 3-phosphate + 5-amino-1-(5-phospho-beta-D-ribosyl)imidazole-4-carboxamide + L-glutamate + H(+). It functions in the pathway amino-acid biosynthesis; L-histidine biosynthesis; L-histidine from 5-phospho-alpha-D-ribose 1-diphosphate: step 5/9. In terms of biological role, IGPS catalyzes the conversion of PRFAR and glutamine to IGP, AICAR and glutamate. The HisF subunit catalyzes the cyclization activity that produces IGP and AICAR from PRFAR using the ammonia provided by the HisH subunit. The chain is Imidazole glycerol phosphate synthase subunit HisF from Cronobacter sakazakii (strain ATCC BAA-894) (Enterobacter sakazakii).